We begin with the raw amino-acid sequence, 1083 residues long: DNA primase (1083 aa).

A CHC2-type zinc finger spans residues 1022 to 1061; sequence CLRYPHRGGRTAPRTFVSLRVDHHNRLCISLAQQCFATKC.

It belongs to the herpesviridae DNA primase family. Associates with the helicase and the primase-associated factor to form the helicase-primase factor.

It localises to the host nucleus. Essential component of the helicase/primase complex. Unwinds the DNA at the replication forks and generates single-stranded DNA for both leading and lagging strand synthesis. The primase initiates primer synthesis and thereby produces large amount of short RNA primers on the lagging strand that the polymerase elongates using dNTPs. This is DNA primase from Homo sapiens (Human).